A 125-amino-acid chain; its full sequence is Small ribosomal subunit protein uS13 (125 aa).

Belongs to the universal ribosomal protein uS13 family. Part of the 30S ribosomal subunit. Forms a loose heterodimer with protein S19. Forms two bridges to the 50S subunit in the 70S ribosome.

Located at the top of the head of the 30S subunit, it contacts several helices of the 16S rRNA. In the 70S ribosome it contacts the 23S rRNA (bridge B1a) and protein L5 of the 50S subunit (bridge B1b), connecting the 2 subunits; these bridges are implicated in subunit movement. Contacts the tRNAs in the A and P-sites. The protein is Small ribosomal subunit protein uS13 of Rickettsia typhi (strain ATCC VR-144 / Wilmington).